The sequence spans 258 residues: Acetylglutamate kinase (258 aa).

Substrate is bound by residues 41–42 (GG), Arg-63, and Asn-156.

This sequence belongs to the acetylglutamate kinase family. ArgB subfamily.

The protein localises to the cytoplasm. It carries out the reaction N-acetyl-L-glutamate + ATP = N-acetyl-L-glutamyl 5-phosphate + ADP. It functions in the pathway amino-acid biosynthesis; L-arginine biosynthesis; N(2)-acetyl-L-ornithine from L-glutamate: step 2/4. Catalyzes the ATP-dependent phosphorylation of N-acetyl-L-glutamate. The protein is Acetylglutamate kinase of Geobacillus kaustophilus (strain HTA426).